Consider the following 211-residue polypeptide: ATP phosphoribosyltransferase (211 aa).

The protein belongs to the ATP phosphoribosyltransferase family. Short subfamily. In terms of assembly, heteromultimer composed of HisG and HisZ subunits.

It localises to the cytoplasm. It carries out the reaction 1-(5-phospho-beta-D-ribosyl)-ATP + diphosphate = 5-phospho-alpha-D-ribose 1-diphosphate + ATP. It functions in the pathway amino-acid biosynthesis; L-histidine biosynthesis; L-histidine from 5-phospho-alpha-D-ribose 1-diphosphate: step 1/9. Functionally, catalyzes the condensation of ATP and 5-phosphoribose 1-diphosphate to form N'-(5'-phosphoribosyl)-ATP (PR-ATP). Has a crucial role in the pathway because the rate of histidine biosynthesis seems to be controlled primarily by regulation of HisG enzymatic activity. The sequence is that of ATP phosphoribosyltransferase from Pseudomonas savastanoi pv. phaseolicola (strain 1448A / Race 6) (Pseudomonas syringae pv. phaseolicola (strain 1448A / Race 6)).